A 231-amino-acid chain; its full sequence is MFSNWNIFLNYKNFTINQEIKNKLNLYYQILIEENQKYNLTRITELNEVFEKHFLDSLLFVEQFQIIDQKIADIGTGAGFPGIVLKIFFPNIKLTLIESNNKKVNFLKYLVQKLNLNDVEILNKRAEELNEYKEQFDIVISRAVAYLNIILELGVQLVKVNGMFILLKGPKAYQEIKDLKNKDQKMNLKLINIQELEDTGFGTRINLFYKKINHTNNLYPRKYQQILKESK.

Residues Gly75, Phe80, 126 to 127 (AE), and Arg142 contribute to the S-adenosyl-L-methionine site.

It belongs to the methyltransferase superfamily. RNA methyltransferase RsmG family.

The protein localises to the cytoplasm. Its function is as follows. Specifically methylates the N7 position of a guanine in 16S rRNA. This Mycoplasma capricolum subsp. capricolum (strain California kid / ATCC 27343 / NCTC 10154) protein is Ribosomal RNA small subunit methyltransferase G.